A 293-amino-acid chain; its full sequence is Acidic endochitinase SE2 (293 aa).

Positions 1 to 25 (MAAKIVSVLFLISLLIFASFESSHG) are cleaved as a signal peptide. The GH18 domain occupies 26–293 (SQIVIYWGQN…GYSSAIKSSV (268 aa)). 2 disulfides stabilise this stretch: cysteine 45–cysteine 91 and cysteine 75–cysteine 81. The active-site Proton donor is glutamate 151. Cysteine 183 and cysteine 212 are oxidised to a cystine.

The protein belongs to the glycosyl hydrolase 18 family. Chitinase class II subfamily. Accumulates in leaves during infection.

The protein resides in the secreted. It localises to the extracellular space. It catalyses the reaction Random endo-hydrolysis of N-acetyl-beta-D-glucosaminide (1-&gt;4)-beta-linkages in chitin and chitodextrins.. Its function is as follows. This protein functions as a defense against chitin containing fungal pathogens. This endochitinase also exhibits exochitinase activity, i.e. it is capable of hydrolyzing chito-oligosaccharides, including chitobiose. This is Acidic endochitinase SE2 (SE2) from Beta vulgaris (Sugar beet).